A 656-amino-acid polypeptide reads, in one-letter code: DNA mismatch repair protein MutL (656 aa).

The protein belongs to the DNA mismatch repair MutL/HexB family.

This protein is involved in the repair of mismatches in DNA. It is required for dam-dependent methyl-directed DNA mismatch repair. May act as a 'molecular matchmaker', a protein that promotes the formation of a stable complex between two or more DNA-binding proteins in an ATP-dependent manner without itself being part of a final effector complex. The protein is DNA mismatch repair protein MutL of Lactococcus lactis subsp. lactis (strain IL1403) (Streptococcus lactis).